The following is a 177-amino-acid chain: Large ribosomal subunit protein uL6 (177 aa).

It belongs to the universal ribosomal protein uL6 family. In terms of assembly, part of the 50S ribosomal subunit.

This protein binds to the 23S rRNA, and is important in its secondary structure. It is located near the subunit interface in the base of the L7/L12 stalk, and near the tRNA binding site of the peptidyltransferase center. In Allorhizobium ampelinum (strain ATCC BAA-846 / DSM 112012 / S4) (Agrobacterium vitis (strain S4)), this protein is Large ribosomal subunit protein uL6.